Consider the following 128-residue polypeptide: Glycine cleavage system H protein (128 aa).

In terms of domain architecture, Lipoyl-binding spans 23–105 (VATVGISDHA…YEGGWLFKVQ (83 aa)). Lysine 64 carries the post-translational modification N6-lipoyllysine.

This sequence belongs to the GcvH family. In terms of assembly, the glycine cleavage system is composed of four proteins: P, T, L and H. It depends on (R)-lipoate as a cofactor.

Its function is as follows. The glycine cleavage system catalyzes the degradation of glycine. The H protein shuttles the methylamine group of glycine from the P protein to the T protein. In Alcanivorax borkumensis (strain ATCC 700651 / DSM 11573 / NCIMB 13689 / SK2), this protein is Glycine cleavage system H protein.